Here is a 300-residue protein sequence, read N- to C-terminus: GTPase Era (300 aa).

The region spanning 7-182 (YCGFIAIVGR…LRKGVHHFPE (176 aa)) is the Era-type G domain. The interval 15–22 (GRPNVGKS) is G1. 15 to 22 (GRPNVGKS) lines the GTP pocket. The G2 stretch occupies residues 41–45 (QTTRH). Residues 62 to 65 (DTPG) form a G3 region. GTP contacts are provided by residues 62–66 (DTPGL) and 124–127 (NKVD). Residues 124-127 (NKVD) form a G4 region. Residues 154-156 (ISA) are G5. Residues 206–283 (TGEELPYSVT…HLELWVKVKS (78 aa)) form the KH type-2 domain.

Belongs to the TRAFAC class TrmE-Era-EngA-EngB-Septin-like GTPase superfamily. Era GTPase family. Monomer.

The protein localises to the cytoplasm. Its subcellular location is the cell inner membrane. Functionally, an essential GTPase that binds both GDP and GTP, with rapid nucleotide exchange. Plays a role in 16S rRNA processing and 30S ribosomal subunit biogenesis and possibly also in cell cycle regulation and energy metabolism. The polypeptide is GTPase Era (Histophilus somni (strain 129Pt) (Haemophilus somnus)).